A 155-amino-acid chain; its full sequence is DNA gyrase inhibitor (155 aa).

This sequence belongs to the DNA gyrase inhibitor family. As to quaternary structure, interacts with DNA gyrase.

Its subcellular location is the cytoplasm. In terms of biological role, inhibits the supercoiling activity of DNA gyrase. Acts by inhibiting DNA gyrase at an early step, prior to (or at the step of) binding of DNA by the gyrase. It protects cells against toxins that target DNA gyrase, by inhibiting activity of these toxins and reducing the formation of lethal double-strand breaks in the cell. This Escherichia fergusonii (strain ATCC 35469 / DSM 13698 / CCUG 18766 / IAM 14443 / JCM 21226 / LMG 7866 / NBRC 102419 / NCTC 12128 / CDC 0568-73) protein is DNA gyrase inhibitor.